Consider the following 461-residue polypeptide: PE-PGRS family protein PE_PGRS45 (461 aa).

One can recognise a PE domain in the interval 4–92 (VNVAPQLVST…GSTYAVAEAA (89 aa)). Disordered regions lie at residues 232–251 (GGAG…GGNG) and 426–461 (AGSL…GADG). The span at 434-446 (PGFGGPGGSGGAS) shows a compositional bias: gly residues.

This sequence belongs to the mycobacterial PE family. PGRS subfamily. Interacts with human TIMM23, which is part of a complex that mediates the translocation of transit peptide-containing proteins across the mitochondrial inner membrane.

It is found in the cell membrane. Its subcellular location is the secreted. It localises to the cell wall. The protein resides in the host mitochondrion. It carries out the reaction hexadecanal + NADP(+) + CoA = hexadecanoyl-CoA + NADPH + H(+). Oxidoreductase activity is inhibited by the first line anti-tubercular drug isoniazid (INH). May be an effector protein that contributes to pathogenesis by targeting host mitochondria, where it modulates host cellular processes. In THP1 macrophages, increases the ADP-to-ATP ratio and increases the cellular ROS levels. Also induces mitochondrial perturbations through membrane depolarization, release of mitochondrial superoxide, up-regulation of expression of host proapoptotic proteins (BAX and BIM) and release of cytochrome C into the cytosol. May bind calcium to increase intracellular calcium influx, which may further lead to mitochondrial perturbations. Mitochondrial perturbations and alteration of Ca(2+) influx are independent but simultaneous events. Its function is as follows. In vitro, shows NADPH-dependent fatty acyl coenzyme A oxidoreductase activity. Can oxidize palmitoyl-CoA, but not glutathione and thiourea. The polypeptide is PE-PGRS family protein PE_PGRS45 (Mycobacterium tuberculosis (strain ATCC 25618 / H37Rv)).